Reading from the N-terminus, the 284-residue chain is Deoxyribonuclease-1 (284 aa).

An N-terminal signal peptide occupies residues 1–22 (MRYTGLMGILLTLVNLLQLAAT). N-linked (GlcNAc...) asparagine glycosylation is present at Asn-40. Residue Glu-100 is part of the active site. Cys-123 and Cys-126 are disulfide-bonded. A glycan (N-linked (GlcNAc...) asparagine) is linked at Asn-128. His-156 is a catalytic residue. Cys-195 and Cys-231 are joined by a disulfide.

The protein belongs to the DNase I family. Ca(2+) serves as cofactor. Requires Mg(2+) as cofactor.

The protein resides in the secreted. It localises to the zymogen granule. The protein localises to the nucleus envelope. The catalysed reaction is Endonucleolytic cleavage to 5'-phosphodinucleotide and 5'-phosphooligonucleotide end-products.. Serum endocuclease secreted into body fluids by a wide variety of exocrine and endocrine organs. Expressed by non-hematopoietic tissues and preferentially cleaves protein-free DNA. Among other functions, seems to be involved in cell death by apoptosis. Binds specifically to G-actin and blocks actin polymerization. Together with DNASE1L3, plays a key role in degrading neutrophil extracellular traps (NETs). NETs are mainly composed of DNA fibers and are released by neutrophils to bind pathogens during inflammation. Degradation of intravascular NETs by DNASE1 and DNASE1L3 is required to prevent formation of clots that obstruct blood vessels and cause organ damage following inflammation. This chain is Deoxyribonuclease-1 (Dnase1), found in Rattus norvegicus (Rat).